The sequence spans 409 residues: Peptidase T (409 aa).

Residue His-78 coordinates Zn(2+). The active site involves Asp-80. Asp-140 contributes to the Zn(2+) binding site. Glu-173 acts as the Proton acceptor in catalysis. Glu-174, Asp-196, and His-379 together coordinate Zn(2+).

It belongs to the peptidase M20B family. Requires Zn(2+) as cofactor.

Its subcellular location is the cytoplasm. The enzyme catalyses Release of the N-terminal residue from a tripeptide.. In terms of biological role, cleaves the N-terminal amino acid of tripeptides. This is Peptidase T from Salmonella paratyphi A (strain ATCC 9150 / SARB42).